A 32-amino-acid chain; its full sequence is 24 kDa flagellin (32 aa).

It belongs to the archaeal flagellin family. Glycosylated.

Its subcellular location is the archaeal flagellum. Flagellin is the subunit protein which polymerizes to form the filaments of archaeal flagella. The polypeptide is 24 kDa flagellin (Methanospirillum hungatei).